The following is a 155-amino-acid chain: Ribosomal RNA large subunit methyltransferase H (155 aa).

S-adenosyl-L-methionine contacts are provided by residues Gly-104 and 123 to 128 (LGPMTF).

Belongs to the RNA methyltransferase RlmH family. Homodimer.

The protein localises to the cytoplasm. It carries out the reaction pseudouridine(1915) in 23S rRNA + S-adenosyl-L-methionine = N(3)-methylpseudouridine(1915) in 23S rRNA + S-adenosyl-L-homocysteine + H(+). Specifically methylates the pseudouridine at position 1915 (m3Psi1915) in 23S rRNA. The polypeptide is Ribosomal RNA large subunit methyltransferase H (Nitratidesulfovibrio vulgaris (strain DSM 19637 / Miyazaki F) (Desulfovibrio vulgaris)).